A 294-amino-acid polypeptide reads, in one-letter code: HTH-type transcriptional regulator DgdR (294 aa).

The HTH lysR-type domain occupies 14-70; the sequence is LEIDLLRSFVVIAEVRALSRAAARVGRTQSALSQQMKRLEDIVDQPLFQRTGRGVVL. Residues 31–50 constitute a DNA-binding region (H-T-H motif); that stretch reads LSRAAARVGRTQSALSQQMK.

The protein belongs to the LysR transcriptional regulatory family.

The protein is HTH-type transcriptional regulator DgdR (dgdR) of Burkholderia cepacia (Pseudomonas cepacia).